Consider the following 832-residue polypeptide: Serine/threonine-protein kinase Doa (832 aa).

Disordered regions lie at residues 1-86 (MVAA…SKYI), 135-158 (LLQH…QQYP), 179-215 (SDPF…KQAP), and 258-419 (SKIG…QLQQ). Polar residues predominate over residues 8 to 18 (VPTSSSSSAAT). Positions 20 to 32 (RQKDVDNKLEKCL) are enriched in basic and acidic residues. Composition is skewed to low complexity over residues 40-53 (TSSN…SNNN), 137-158 (QHQQ…QQYP), and 183-203 (MQQQ…KLQQ). Polar residues predominate over residues 271–282 (HSASFSSAQRPT). 3 stretches are compositionally biased toward low complexity: residues 285–310 (QFHQ…QHQH), 347–365 (QMQP…TQFQ), and 396–419 (SSSS…QLQQ). The region spanning 479-799 (YKIMATLGEG…LGEALHHPFF (321 aa)) is the Protein kinase domain. ATP contacts are provided by residues 485–493 (LGEGTFGRV) and lysine 508. The Proton acceptor role is filled by aspartate 605. Residues 809–832 (GEVSNKQPLSSGSSSRERSHSLSR) form a disordered region. A compositionally biased stretch (basic and acidic residues) spans 823–832 (SRERSHSLSR).

Belongs to the protein kinase superfamily. CMGC Ser/Thr protein kinase family. Lammer subfamily. Interacts (via N-terminus) with x16 (via Arg/Ser-rich region). Interacts with eEF1gamma (via C-terminus); the interaction is probably direct, is transient and leads to phosphorylation of eEF1gamma by Doa. It depends on Mg(2+) as a cofactor. In terms of processing, autophosphorylated on serine, threonine and tyrosine residues. In terms of tissue distribution, ubiquitous expression in embryos. Stage 17 embryos show elevated expression in CNS and brain. Ubiquitous expression in larval imaginal disks. Increased expression posterior to the eye-antennal disk morphogenetic furrow.

The protein localises to the cytoplasm. It is found in the cytosol. Its subcellular location is the nucleus. The catalysed reaction is L-seryl-[protein] + ATP = O-phospho-L-seryl-[protein] + ADP + H(+). It catalyses the reaction L-threonyl-[protein] + ATP = O-phospho-L-threonyl-[protein] + ADP + H(+). It carries out the reaction L-tyrosyl-[protein] + ATP = O-phospho-L-tyrosyl-[protein] + ADP + H(+). Dual specificity kinase involved in the negative regulation of microtubule-based transport through phsophorylation of the microtuble-binding protein eEF1gamma. May function in the control of alternative splicing by phosphorylating serine/arginine-rich splicing factors, the SR proteins, including x16. Negative regulator of the copia retrotransposon element of the white (w) gene. In the eye, it is required for normal pigmentation, photoreceptor cell development and for organization of interommatidial bristles. Also essential for embryonic segmentation and differentiation of the nervous system. In terms of biological role, may be the specific isoform involved in regulation of microtubule-based transport through phosphorylation of the microtubule binding protein eEF1gamma. This Drosophila melanogaster (Fruit fly) protein is Serine/threonine-protein kinase Doa.